Here is an 877-residue protein sequence, read N- to C-terminus: Phosphoenolpyruvate carboxylase (877 aa).

Active-site residues include histidine 137 and lysine 544.

Belongs to the PEPCase type 1 family. It depends on Mg(2+) as a cofactor.

The catalysed reaction is oxaloacetate + phosphate = phosphoenolpyruvate + hydrogencarbonate. Functionally, forms oxaloacetate, a four-carbon dicarboxylic acid source for the tricarboxylic acid cycle. In Edwardsiella ictaluri (strain 93-146), this protein is Phosphoenolpyruvate carboxylase.